Consider the following 231-residue polypeptide: DNA mismatch repair protein MutH (231 aa).

It belongs to the MutH family.

The protein localises to the cytoplasm. Functionally, sequence-specific endonuclease that cleaves unmethylated GATC sequences. It is involved in DNA mismatch repair. In Salmonella typhi, this protein is DNA mismatch repair protein MutH.